The sequence spans 517 residues: Fatty acyl-CoA reductase wat (517 aa).

The next 2 helical transmembrane spans lie at 378 to 398 and 492 to 512; these read ILCFLYHTLPALVMDAIMVII and VLHYTTLAVFYALAAWALYAL.

This sequence belongs to the fatty acyl-CoA reductase family.

Its subcellular location is the apical cell membrane. It catalyses the reaction a long-chain fatty acyl-CoA + 2 NADPH + 2 H(+) = a long-chain primary fatty alcohol + 2 NADP(+) + CoA. Its function is as follows. Catalyzes the reduction of saturated fatty acyl-CoA to fatty alcohols. The preferred substrates are C24:0 and C26:0. Necessary for the final stages of tracheal maturation, to facilitate the transition from water-filled to gas-filled tubes. May help to maintain the integrity of the outer hydrophobic envelope of the trachea. This is Fatty acyl-CoA reductase wat from Drosophila melanogaster (Fruit fly).